A 423-amino-acid polypeptide reads, in one-letter code: Transmembrane protease serine 11E (423 aa).

Over 1-18 (MYRSCVVRARKRTCVEPW) the chain is Cytoplasmic. A helical; Signal-anchor for type II membrane protein transmembrane segment spans residues 19–39 (VIGIISFLSLIVLAVCIGLTV). The Extracellular segment spans residues 40–423 (HYVRYNHRRT…RHWIASNTGI (384 aa)). Residues 48 to 166 (RTYNYYSTLS…ESVKIKKINK (119 aa)) form the SEA domain. N-linked (GlcNAc...) asparagine glycans are attached at residues Asn-74, Asn-165, Asn-182, and Asn-223. Disulfide bonds link Cys-176–Cys-297, Cys-217–Cys-233, Cys-342–Cys-358, and Cys-369–Cys-398. The Peptidase S1 domain maps to 192–422 (IVGGTPVEEE…FRHWIASNTG (231 aa)). Active-site charge relay system residues include His-232 and Asp-277. Residue Ser-373 is the Charge relay system of the active site.

This sequence belongs to the peptidase S1 family. In terms of assembly, forms a heterodimer with SERPINA5 and SERPINE1. Post-translationally, N-glycosylated. As to expression, expressed in epidermal, oral and male reproductive tissues.

It localises to the cell membrane. It is found in the secreted. Inhibited by SERPINA5. Functionally, serine protease which possesses both gelatinolytic and caseinolytic activities. Shows a preference for Arg in the P1 position. This is Transmembrane protease serine 11E (Tmprss11e) from Mus musculus (Mouse).